Consider the following 293-residue polypeptide: Bifunctional protein FolD (293 aa).

Residues 169–171 (GRG), Thr-196, and Val-237 contribute to the NADP(+) site.

Belongs to the tetrahydrofolate dehydrogenase/cyclohydrolase family. As to quaternary structure, homodimer.

The enzyme catalyses (6R)-5,10-methylene-5,6,7,8-tetrahydrofolate + NADP(+) = (6R)-5,10-methenyltetrahydrofolate + NADPH. The catalysed reaction is (6R)-5,10-methenyltetrahydrofolate + H2O = (6R)-10-formyltetrahydrofolate + H(+). It functions in the pathway one-carbon metabolism; tetrahydrofolate interconversion. In terms of biological role, catalyzes the oxidation of 5,10-methylenetetrahydrofolate to 5,10-methenyltetrahydrofolate and then the hydrolysis of 5,10-methenyltetrahydrofolate to 10-formyltetrahydrofolate. This chain is Bifunctional protein FolD, found in Leifsonia xyli subsp. xyli (strain CTCB07).